The sequence spans 469 residues: Putative arginine/ornithine antiporter (469 aa).

The next 12 membrane-spanning stretches (helical) occupy residues 8 to 28 (GFWLLTAFVVGNMVGSGIFSL), 44 to 64 (AWLLTGAGVLMIALVFGHLSI), 90 to 110 (AGFTMVWGYWVASWISNVAII), 144 to 164 (LTFAVCTILLWGTHAILVASI), 179 to 199 (VLGFVFFIVAGLFVFQTSLFG), 213 to 233 (IGIGGQVHNAAISTLWAFVGI), 254 to 274 (ITGLLIALSIYIIVTLITMGV), 301 to 321 (VIMALLAILCLFGTMLGWILL), 347 to 367 (SPVIALIITNVMSQVFIFSVI), 375 to 395 (FTFLTTAATLAYLIPYLVSAI), 417 to 437 (DGLIAILACAYSVFVIVTGTA), and 439 to 459 (LTTFILGIGLFFVGLIVYPFV).

The protein belongs to the amino acid-polyamine-organocation (APC) superfamily. Basic amino acid/polyamine antiporter (APA) (TC 2.A.3.2) family.

Its subcellular location is the cell membrane. It catalyses the reaction L-ornithine(in) + L-arginine(out) = L-ornithine(out) + L-arginine(in). Catalyzes electroneutral exchange between L-arginine and L-ornithine. This is Putative arginine/ornithine antiporter (yvsH) from Bacillus subtilis (strain 168).